The chain runs to 428 residues: MLDPKFLRTELEATAERLATRGFILDVDRLSKLEEKRKSLQVATEELQASRNAISKSIGQAKAKGEDVAPIMAKVGDLGAELSSKEAELKQLLEELNAIAMSVPNLPDESAPIGADENDNVEIRRWGEPKQFDFDVKDHVDLGEQHAGLDFKSAVKITGSRFIVMKGQIARMHRALTQFMLDLHTTEHGYTETYVPLLVNEDSLLGTGQLPKFGEDLFHTKPATEEGQGLSLIPTAEVPLTNLARDTIIDEDELPIKMTAHTACFRSEAGSYGRDTRGLIRQHQFDKVELVQLVKPEDSMAALESLTQHAETVLQRLGLPYRTVVLCTGDMGFGAAKTFDIEVWLPAQNTYREISSCSNMQDFQARRMQARYKAKSAKKPALLHTLNGSGLAVGRTLVAVLENYQNADGSITVPEALRPYMGGLTQIG.

235-237 (TAE) serves as a coordination point for L-serine. Residue 266–268 (RSE) participates in ATP binding. E289 is a binding site for L-serine. 353-356 (EISS) is a binding site for ATP. S389 provides a ligand contact to L-serine.

It belongs to the class-II aminoacyl-tRNA synthetase family. Type-1 seryl-tRNA synthetase subfamily. Homodimer. The tRNA molecule binds across the dimer.

It is found in the cytoplasm. It catalyses the reaction tRNA(Ser) + L-serine + ATP = L-seryl-tRNA(Ser) + AMP + diphosphate + H(+). The enzyme catalyses tRNA(Sec) + L-serine + ATP = L-seryl-tRNA(Sec) + AMP + diphosphate + H(+). The protein operates within aminoacyl-tRNA biosynthesis; selenocysteinyl-tRNA(Sec) biosynthesis; L-seryl-tRNA(Sec) from L-serine and tRNA(Sec): step 1/1. Catalyzes the attachment of serine to tRNA(Ser). Is also able to aminoacylate tRNA(Sec) with serine, to form the misacylated tRNA L-seryl-tRNA(Sec), which will be further converted into selenocysteinyl-tRNA(Sec). The protein is Serine--tRNA ligase of Shewanella loihica (strain ATCC BAA-1088 / PV-4).